A 77-amino-acid polypeptide reads, in one-letter code: Protein AC43 (77 aa).

Functionally, plays a role in the production of occlusion bodies as well as expression of the polyhedrin gene. The polypeptide is Protein AC43 (Autographa californica nuclear polyhedrosis virus (AcMNPV)).